The following is a 197-amino-acid chain: Nucleoid occlusion factor SlmA (197 aa).

Residues Ile-7–Leu-67 enclose the HTH tetR-type domain. The segment at residues Thr-30 to Phe-49 is a DNA-binding region (H-T-H motif).

It belongs to the nucleoid occlusion factor SlmA family. As to quaternary structure, homodimer. Interacts with FtsZ.

Its subcellular location is the cytoplasm. It is found in the nucleoid. In terms of biological role, required for nucleoid occlusion (NO) phenomenon, which prevents Z-ring formation and cell division over the nucleoid. Acts as a DNA-associated cell division inhibitor that binds simultaneously chromosomal DNA and FtsZ, and disrupts the assembly of FtsZ polymers. SlmA-DNA-binding sequences (SBS) are dispersed on non-Ter regions of the chromosome, preventing FtsZ polymerization at these regions. This chain is Nucleoid occlusion factor SlmA, found in Shewanella woodyi (strain ATCC 51908 / MS32).